The chain runs to 434 residues: Glucose-1-phosphate adenylyltransferase (434 aa).

Alpha-D-glucose 1-phosphate is bound by residues Tyr-112, Gly-178, 193-194, and Ser-211; that span reads EK.

Belongs to the bacterial/plant glucose-1-phosphate adenylyltransferase family. As to quaternary structure, homotetramer.

It catalyses the reaction alpha-D-glucose 1-phosphate + ATP + H(+) = ADP-alpha-D-glucose + diphosphate. It functions in the pathway glycan biosynthesis; glycogen biosynthesis. In terms of biological role, involved in the biosynthesis of ADP-glucose, a building block required for the elongation reactions to produce glycogen. Catalyzes the reaction between ATP and alpha-D-glucose 1-phosphate (G1P) to produce pyrophosphate and ADP-Glc. In Mannheimia succiniciproducens (strain KCTC 0769BP / MBEL55E), this protein is Glucose-1-phosphate adenylyltransferase.